Consider the following 377-residue polypeptide: Pseudouridylate synthase RPUSD4, mitochondrial (377 aa).

A mitochondrion-targeting transit peptide spans 1-46; it reads MAAPCLRTPGVQLLSMSSRPGRLFTPGSWSFCSSATSSRPLNAQRL. The active site involves Asp153.

The protein belongs to the pseudouridine synthase RluA family. Interacts with 16S mt-rRNA, mt-tRNA(Phe) and mt-tRNA(Met). Forms a regulatory protein-RNA complex, consisting of RCC1L, NGRN, RPUSD3, RPUSD4, TRUB2, FASTKD2 and 16S mt-rRNA.

It is found in the mitochondrion matrix. The protein localises to the nucleus. The protein resides in the cytoplasm. It carries out the reaction uridine in 5S rRNA = pseudouridine in 5S rRNA. The enzyme catalyses a uridine in tRNA = a pseudouridine in tRNA. It catalyses the reaction a uridine in mRNA = a pseudouridine in mRNA. Its function is as follows. Catalyzes uridine to pseudouridine isomerization (pseudouridylation) of different mitochondrial RNA substrates. Acts on position 1397 in 16S mitochondrial ribosomal RNA (16S mt-rRNA). This modification is required for the assembly of 16S mt-rRNA into a functional mitochondrial ribosome. As a component of a functional protein-RNA module, consisting of RCC1L, NGRN, RPUSD3, RPUSD4, TRUB2, FASTKD2 and 16S mt-rRNA, controls 16S mt-rRNA abundance and is required for intra-mitochondrial translation. Acts on position 39 in mitochondrial tRNA(Phe). Also catalyzes pseudouridylation of mRNAs in nucleus: acts as a regulator of pre-mRNA splicing by mediating pseudouridylation of pre-mRNAs at locations associated with alternatively spliced regions. Pseudouridylation of pre-mRNAs near splice sites directly regulates mRNA splicing and mRNA 3'-end processing. In Mus musculus (Mouse), this protein is Pseudouridylate synthase RPUSD4, mitochondrial.